We begin with the raw amino-acid sequence, 1167 residues long: Melanoma receptor tyrosine-protein kinase (1167 aa).

The first 25 residues, 1–25 (MEFLRGGAALLQLLLVLSISRCCST), serve as a signal peptide directing secretion. Over 26–642 (DPDRKVCQGT…GCRGDIVSHS (617 aa)) the chain is Extracellular. N-linked (GlcNAc...) asparagine glycans are attached at residues Asn114, Asn144, and Asn201. 11 disulfide bridges follow: Cys195/Cys204, Cys199/Cys212, Cys220/Cys228, Cys224/Cys236, Cys237/Cys245, Cys241/Cys253, Cys256/Cys265, Cys269/Cys296, Cys300/Cys311, Cys315/Cys330, and Cys333/Cys337. 5 N-linked (GlcNAc...) asparagine glycosylation sites follow: Asn356, Asn365, Asn398, Asn417, and Asn501. 9 disulfides stabilise this stretch: Cys504–Cys513, Cys508–Cys521, Cys524–Cys533, Cys537–Cys553, Cys556–Cys569, Cys560–Cys577, Cys593–Cys615, Cys618–Cys626, and Cys622–Cys634. The N-linked (GlcNAc...) asparagine glycan is linked to Asn576. The N-linked (GlcNAc...) asparagine glycan is linked to Asn621. Residues 643 to 665 (SLAVGLVSGLLITVIVALLIVVL) form a helical membrane-spanning segment. Residues 666–1167 (LRRRRIKRKR…QGGALYTPVR (502 aa)) lie on the Cytoplasmic side of the membrane. The 268-residue stretch at 710 to 977 (FKKDRVLGSG…QMARDPSRYL (268 aa)) folds into the Protein kinase domain. Residues 716-724 (LGSGAFGTV) and Lys743 each bind ATP. Residue Asp835 is the Proton acceptor of the active site.

It belongs to the protein kinase superfamily. Tyr protein kinase family. EGF receptor subfamily.

Its subcellular location is the membrane. The catalysed reaction is L-tyrosyl-[protein] + ATP = O-phospho-L-tyrosyl-[protein] + ADP + H(+). Functionally, probable receptor with tyrosine-protein kinase activity. The polypeptide is Melanoma receptor tyrosine-protein kinase (xmrk) (Xiphophorus maculatus (Southern platyfish)).